A 1481-amino-acid chain; its full sequence is Structural protein ORF147 (1481 aa).

Disordered regions lie at residues 65-88 (AEKR…ENLE) and 1319-1403 (DEKL…PPIP). 3 stretches are compositionally biased toward low complexity: residues 73 to 84 (KGSQKKSNSSSS), 1323 to 1336 (SSTV…SPKT), and 1393 to 1403 (SSRTTITPPIP).

The protein resides in the virion. This chain is Structural protein ORF147, found in Noctuidae (owlet moths).